The chain runs to 544 residues: CTP synthase (544 aa).

Residues Met1–Leu266 are amidoligase domain. Ser14 provides a ligand contact to CTP. Ser14 contacts UTP. ATP-binding positions include Ser15–Ile20 and Asp72. Mg(2+) contacts are provided by Asp72 and Glu140. Residues Asp147–Glu149, Lys187–Gln192, and Lys223 each bind CTP. Residues Lys187 to Gln192 and Lys223 each bind UTP. The 251-residue stretch at Thr291–Ile541 folds into the Glutamine amidotransferase type-1 domain. Gly352 contacts L-glutamine. Cys379 acts as the Nucleophile; for glutamine hydrolysis in catalysis. L-glutamine-binding positions include Leu380–Gln383, Glu403, and Arg469. Catalysis depends on residues His514 and Glu516.

The protein belongs to the CTP synthase family. Homotetramer.

The catalysed reaction is UTP + L-glutamine + ATP + H2O = CTP + L-glutamate + ADP + phosphate + 2 H(+). It catalyses the reaction L-glutamine + H2O = L-glutamate + NH4(+). The enzyme catalyses UTP + NH4(+) + ATP = CTP + ADP + phosphate + 2 H(+). It functions in the pathway pyrimidine metabolism; CTP biosynthesis via de novo pathway; CTP from UDP: step 2/2. Allosterically activated by GTP, when glutamine is the substrate; GTP has no effect on the reaction when ammonia is the substrate. The allosteric effector GTP functions by stabilizing the protein conformation that binds the tetrahedral intermediate(s) formed during glutamine hydrolysis. Inhibited by the product CTP, via allosteric rather than competitive inhibition. Functionally, catalyzes the ATP-dependent amination of UTP to CTP with either L-glutamine or ammonia as the source of nitrogen. Regulates intracellular CTP levels through interactions with the four ribonucleotide triphosphates. In Buchnera aphidicola subsp. Baizongia pistaciae (strain Bp), this protein is CTP synthase.